Here is a 190-residue protein sequence, read N- to C-terminus: CDP-diacylglycerol--glycerol-3-phosphate 3-phosphatidyltransferase (190 aa).

The Cytoplasmic portion of the chain corresponds to 6-17; it reads GVFNIPMYLTLF. The helical transmembrane segment at 18–42 threads the bilayer; that stretch reads RIIMVPCFVAVFYWPIYWSPMLCTL. Topologically, residues 43–65 are periplasmic; sequence IFFIAAITDWFDGFLARRWNQTS. Residues 66–86 traverse the membrane as a helical segment; sequence RIGGFLDPIADKIMIITALIL. Topologically, residues 87–91 are cytoplasmic; the sequence is ISEHF. A helical membrane pass occupies residues 92–112; that stretch reads HVWWMTLPISSIIIREILISS. The Periplasmic portion of the chain corresponds to 113–150; that stretch reads LRECIARVDNKNNISVIWLSKVKTFAQMLALIALLCRL. Residues 151-173 traverse the membrane as a helical segment; the sequence is NEWTVIMGVISLYTAMLLTLWSM. Topologically, residues 174 to 186 are cytoplasmic; the sequence is CYYVYSVSSILLQ.

The protein belongs to the CDP-alcohol phosphatidyltransferase class-I family.

Its subcellular location is the cell inner membrane. The enzyme catalyses a CDP-1,2-diacyl-sn-glycerol + sn-glycerol 3-phosphate = a 1,2-diacyl-sn-glycero-3-phospho-(1'-sn-glycero-3'-phosphate) + CMP + H(+). It participates in phospholipid metabolism; phosphatidylglycerol biosynthesis; phosphatidylglycerol from CDP-diacylglycerol: step 1/2. Its function is as follows. Catalyzes the conversion of cytidine diphosphate diacylglycerol (CDP-DG) and glycerol 3-phosphate into phosphatidylglycerol. Essential for the synthesis of anionic phospholipids, thereby playing a role in balancing the ratio of zwitterionic and anionic phospholipids, which is thought to be important for normal membrane function. In Blochmanniella floridana, this protein is CDP-diacylglycerol--glycerol-3-phosphate 3-phosphatidyltransferase.